Reading from the N-terminus, the 285-residue chain is Chlorite dismutase (285 aa).

The signal sequence occupies residues 1-38; it reads MKVRCVSLVAAGLLTIAGSAIGQPAPAPMPAMAPAAKP. Glutamate 105 is a binding site for Ca(2+). Histidine 205 contacts heme. Arginine 218 (proton acceptor) is an active-site residue. Positions 227 and 266 each coordinate Ca(2+).

Belongs to the chlorite dismutase family. In terms of assembly, homopentamer. The cofactor is heme b.

It is found in the periplasm. The catalysed reaction is chloride + O2 = chlorite. Catalyzes the heme-dependent decomposition of chlorite to O(2) and chloride with high efficiency and specificity. Used to detoxify chlorite, a by-product of the reduction of perchlorate, a primarily anthropogenic pollutant, in perchlorate-respiring bacteria. In Ideonella dechloratans, this protein is Chlorite dismutase (cld).